A 398-amino-acid chain; its full sequence is Alpha-2,8-sialyltransferase 8F (398 aa).

The Cytoplasmic portion of the chain corresponds to 1-3 (MRP). The helical; Signal-anchor for type II membrane protein transmembrane segment at 4 to 24 (GGALLALLASLLLLLLLRLLW) threads the bilayer. Residues 25–398 (CPADAPGRAR…KLQFSKCEVA (374 aa)) are Lumenal-facing. 4 N-linked (GlcNAc...) asparagine glycosylation sites follow: Asn66, Asn93, Asn151, and Asn196. 2 disulfides stabilise this stretch: Cys186/Cys335 and Cys200/Cys395. Residues Asn214, 236–238 (NPS), and 322–324 (STG) each bind substrate. His370 serves as the catalytic Proton donor/acceptor.

It belongs to the glycosyltransferase 29 family.

It localises to the golgi apparatus membrane. The catalysed reaction is a ganglioside GM3 + CMP-N-acetyl-beta-neuraminate = a ganglioside GD3 + CMP + H(+). The enzyme catalyses a ganglioside GM3 (d18:1(4E)) + CMP-N-acetyl-beta-neuraminate = a ganglioside GD3 (d18:1(4E)) + CMP + H(+). It carries out the reaction a ganglioside GD1a (d18:1(4E)) + CMP-N-acetyl-beta-neuraminate = a ganglioside GT1a (d18:1(4E)) + CMP + H(+). It catalyses the reaction a ganglioside GD1a + CMP-N-acetyl-beta-neuraminate = a ganglioside GT1a + CMP + H(+). The catalysed reaction is a ganglioside GM1b (d18:1(4E)) + CMP-N-acetyl-beta-neuraminate = a ganglioside GD1c (d18:1(4E)) + CMP + H(+). The enzyme catalyses a ganglioside GM1b + CMP-N-acetyl-beta-neuraminate = a ganglioside GD1c + CMP + H(+). It carries out the reaction a ganglioside GM4 (d18:1(4E)) + CMP-N-acetyl-beta-neuraminate = an N-acetyl-alpha-neuraminosyl-(2-&gt;8)-N-acetyl-alpha-neuraminosyl-(2-&gt;3)-beta-D-galactosyl-(1&lt;-&gt;1')-N-acylsphing-4-enine + CMP + H(+). It catalyses the reaction N-acetyl-alpha-neuraminosyl-(2-&gt;3)-beta-D-galactosyl-(1&lt;-&gt;1')-ceramide + CMP-N-acetyl-beta-neuraminate = N-acetyl-alpha-neuraminosyl-(2-&gt;8)-N-acetyl-alpha-neuraminosyl-(2-&gt;3)-beta-D-galactosyl-(1&lt;-&gt;1')-ceramide + CMP + H(+). The catalysed reaction is a ganglioside GT1b (d18:1(4E)) + CMP-N-acetyl-beta-neuraminate = a ganglioside GQ1b (d18:1(4E)) + CMP + H(+). The enzyme catalyses a ganglioside GT1b + CMP-N-acetyl-beta-neuraminate = a ganglioside GQ1b + CMP + H(+). Its pathway is protein modification; protein glycosylation. In terms of biological role, alpha-2,8-sialyltransferase that prefers O-glycans to N-glycans or glycolipids as acceptor substrates. The minimal acceptor substrate is the NeuAc-alpha-2,3(6)-Gal sequence at the non-reducing end of their carbohydrate groups. In Homo sapiens (Human), this protein is Alpha-2,8-sialyltransferase 8F.